The sequence spans 286 residues: 4-hydroxy-tetrahydrodipicolinate synthase (286 aa).

Thr-42 lines the pyruvate pocket. Tyr-129 (proton donor/acceptor) is an active-site residue. Lys-157 functions as the Schiff-base intermediate with substrate in the catalytic mechanism. Ile-196 is a pyruvate binding site.

Belongs to the DapA family. As to quaternary structure, homotetramer; dimer of dimers.

The protein localises to the cytoplasm. The catalysed reaction is L-aspartate 4-semialdehyde + pyruvate = (2S,4S)-4-hydroxy-2,3,4,5-tetrahydrodipicolinate + H2O + H(+). Its pathway is amino-acid biosynthesis; L-lysine biosynthesis via DAP pathway; (S)-tetrahydrodipicolinate from L-aspartate: step 3/4. In terms of biological role, catalyzes the condensation of (S)-aspartate-beta-semialdehyde [(S)-ASA] and pyruvate to 4-hydroxy-tetrahydrodipicolinate (HTPA). This chain is 4-hydroxy-tetrahydrodipicolinate synthase, found in Chlamydia trachomatis serovar A (strain ATCC VR-571B / DSM 19440 / HAR-13).